The following is a 324-amino-acid chain: MKKIAVLTSGGDAPGLNACIRAVVRAGHYYNCEVIGVRRGFKGLIEKQFISLTPRDVGGIIDKGGTFLLSAREDRFLEYKYRKIAANNIREEKIDGLFVIGGNGSFQGAYLLSKEFGIPIIGIPKTIDNDTYGTEYTIGFDTAVNNAVDAIDKIRDTSESHERVFVIEVMGRKSGFLALAAGISTGADVTLIPEYPFPMHVIVKSIVDALNRGKKFAIVVVAEGVASAKEIADILNEKLKPFDFGGVRYSVLGYIQRGGSPTSYDRIMASRFGVFAVEEFMRGNRDFMVALENGKILSKPLEVSFGRIKKPDLKDFELNNILTI.

Position 11 (Gly-11) interacts with ATP. Arg-21–Arg-25 is a binding site for ADP. ATP is bound by residues Arg-72–Glu-73 and Gly-102–Ser-105. Position 103 (Asn-103) interacts with Mg(2+). Residue Thr-126 to Asp-128 coordinates substrate. Residue Asp-128 is the Proton acceptor of the active site. Arg-155 is a binding site for ADP. Residues Arg-163 and Met-170–Arg-172 contribute to the substrate site. Residues Gly-186 to Asp-188, Arg-212, and Lys-214 to Phe-216 each bind ADP. Substrate is bound by residues Glu-223, Arg-248, and Tyr-254–Arg-257.

Belongs to the phosphofructokinase type A (PFKA) family. ATP-dependent PFK group I subfamily. Prokaryotic clade 'B1' sub-subfamily. In terms of assembly, homotetramer. Mg(2+) serves as cofactor.

Its subcellular location is the cytoplasm. The catalysed reaction is beta-D-fructose 6-phosphate + ATP = beta-D-fructose 1,6-bisphosphate + ADP + H(+). The protein operates within carbohydrate degradation; glycolysis; D-glyceraldehyde 3-phosphate and glycerone phosphate from D-glucose: step 3/4. Its activity is regulated as follows. Allosterically activated by ADP and other diphosphonucleosides, and allosterically inhibited by phosphoenolpyruvate. Catalyzes the phosphorylation of D-fructose 6-phosphate to fructose 1,6-bisphosphate by ATP, the first committing step of glycolysis. The protein is ATP-dependent 6-phosphofructokinase of Persephonella marina (strain DSM 14350 / EX-H1).